We begin with the raw amino-acid sequence, 207 residues long: Small ribosomal subunit protein uS4 (207 aa).

The span at 29–38 shows a compositional bias: basic and acidic residues; the sequence is QDKAKFDSKP. Residues 29 to 54 form a disordered region; that stretch reads QDKAKFDSKPGQHGRTSGQRTSDYGL. Over residues 42–52 the composition is skewed to polar residues; that stretch reads GRTSGQRTSDY. Positions 97-160 constitute an S4 RNA-binding domain; that stretch reads SRLDNVVYRM…KKQTRIAEAL (64 aa).

This sequence belongs to the universal ribosomal protein uS4 family. Part of the 30S ribosomal subunit. Contacts protein S5. The interaction surface between S4 and S5 is involved in control of translational fidelity.

One of the primary rRNA binding proteins, it binds directly to 16S rRNA where it nucleates assembly of the body of the 30S subunit. In terms of biological role, with S5 and S12 plays an important role in translational accuracy. This Variovorax paradoxus (strain S110) protein is Small ribosomal subunit protein uS4.